The chain runs to 265 residues: Putative hydro-lyase PA2116 (265 aa).

Belongs to the D-glutamate cyclase family.

This is Putative hydro-lyase PA2116 from Pseudomonas aeruginosa (strain ATCC 15692 / DSM 22644 / CIP 104116 / JCM 14847 / LMG 12228 / 1C / PRS 101 / PAO1).